We begin with the raw amino-acid sequence, 465 residues long: Putative subtilisin-like proteinase 1 (465 aa).

An N-terminal signal peptide occupies residues 1 to 17 (MILAIISLSVVICREVS). One can recognise an Inhibitor I9 domain in the interval 19 to 90 (YIVMFDQDPS…VKMVVKDSPV (72 aa)). The Peptidase S8 domain occupies 115–447 (PWGLARVGGS…PSLFNANKKK (333 aa)). Catalysis depends on charge relay system residues D148 and H180. A disulfide bridge links C329 with C360. S386 (charge relay system) is an active-site residue.

Belongs to the peptidase S8 family.

Its subcellular location is the secreted. It is found in the extracellular space. May be involved in the degradation of proteins for nutrient acquisition or possess a regulatory function by proteolytic activation of proproteins. This Encephalitozoon cuniculi (strain GB-M1) (Microsporidian parasite) protein is Putative subtilisin-like proteinase 1 (SPL1).